The sequence spans 163 residues: Photosystem II extrinsic protein V (163 aa).

The first 26 residues, 1-26, serve as a signal peptide directing secretion; that stretch reads MLKRSSWLAALLGLLTVVSTSTHTYA. Heme c contacts are provided by cysteine 63, cysteine 66, histidine 67, and histidine 118.

This sequence belongs to the cytochrome c family. PsbV subfamily. As to quaternary structure, PSII is composed of 1 copy each of membrane proteins PsbA, PsbB, PsbC, PsbD, PsbE, PsbF, PsbH, PsbI, PsbJ, PsbK, PsbL, PsbM, PsbT, PsbY, PsbZ, Psb30/Ycf12, at least 3 peripheral proteins of the oxygen-evolving complex and a large number of cofactors. It forms dimeric complexes. The extrinsic subunits in red algae are PsbO (OEC33), PsbQ', cytochrome c-550 and PsbU. Requires heme c as cofactor.

It is found in the plastid. The protein localises to the chloroplast thylakoid membrane. One of the extrinsic, lumenal subunits of photosystem II (PSII). PSII is a light-driven water plastoquinone oxidoreductase, using light energy to abstract electrons from H(2)O, generating a proton gradient subsequently used for ATP formation. The extrinsic proteins stabilize the structure of photosystem II oxygen-evolving complex (OEC), the ion environment of oxygen evolution and protect the OEC against heat-induced inactivation. The polypeptide is Photosystem II extrinsic protein V (Pyropia yezoensis (Susabi-nori)).